A 347-amino-acid chain; its full sequence is Ribosomal RNA large subunit methyltransferase M (347 aa).

S-adenosyl-L-methionine contacts are provided by residues Ser184, 217–220, Asp236, Asp256, and Asp272; that span reads APGG. Lys301 functions as the Proton acceptor in the catalytic mechanism.

The protein belongs to the class I-like SAM-binding methyltransferase superfamily. RNA methyltransferase RlmE family. RlmM subfamily. Monomer.

It is found in the cytoplasm. The catalysed reaction is cytidine(2498) in 23S rRNA + S-adenosyl-L-methionine = 2'-O-methylcytidine(2498) in 23S rRNA + S-adenosyl-L-homocysteine + H(+). In terms of biological role, catalyzes the 2'-O-methylation at nucleotide C2498 in 23S rRNA. The chain is Ribosomal RNA large subunit methyltransferase M from Xanthomonas oryzae pv. oryzae (strain PXO99A).